The chain runs to 115 residues: Peptidyl-tRNA hydrolase (115 aa).

The protein belongs to the PTH2 family.

Its subcellular location is the cytoplasm. It carries out the reaction an N-acyl-L-alpha-aminoacyl-tRNA + H2O = an N-acyl-L-amino acid + a tRNA + H(+). The natural substrate for this enzyme may be peptidyl-tRNAs which drop off the ribosome during protein synthesis. In Methanococcoides burtonii (strain DSM 6242 / NBRC 107633 / OCM 468 / ACE-M), this protein is Peptidyl-tRNA hydrolase.